The primary structure comprises 227 residues: Cytochrome c oxidase subunit 2 (227 aa).

The Mitochondrial intermembrane portion of the chain corresponds to 1-14; that stretch reads MAYPFQLGLQDATS. A helical membrane pass occupies residues 15-45; the sequence is PIMEELLHFHDHTLMIVFLISSLVLYIISSM. Over 46 to 59 the chain is Mitochondrial matrix; sequence LTTKLTHTSTMDAQ. Residues 60–87 form a helical membrane-spanning segment; it reads EVETVWTILPAIILVLIALPSLRILYMM. The Mitochondrial intermembrane segment spans residues 88-227; it reads DEINNPSLTV…YFETWSALML (140 aa). 6 residues coordinate Cu cation: His-161, Cys-196, Glu-198, Cys-200, His-204, and Met-207. Glu-198 serves as a coordination point for Mg(2+). Tyr-218 is modified (phosphotyrosine).

Belongs to the cytochrome c oxidase subunit 2 family. Component of the cytochrome c oxidase (complex IV, CIV), a multisubunit enzyme composed of 14 subunits. The complex is composed of a catalytic core of 3 subunits MT-CO1, MT-CO2 and MT-CO3, encoded in the mitochondrial DNA, and 11 supernumerary subunits COX4I, COX5A, COX5B, COX6A, COX6B, COX6C, COX7A, COX7B, COX7C, COX8 and NDUFA4, which are encoded in the nuclear genome. The complex exists as a monomer or a dimer and forms supercomplexes (SCs) in the inner mitochondrial membrane with NADH-ubiquinone oxidoreductase (complex I, CI) and ubiquinol-cytochrome c oxidoreductase (cytochrome b-c1 complex, complex III, CIII), resulting in different assemblies (supercomplex SCI(1)III(2)IV(1) and megacomplex MCI(2)III(2)IV(2)). Found in a complex with TMEM177, COA6, COX18, COX20, SCO1 and SCO2. Interacts with TMEM177 in a COX20-dependent manner. Interacts with COX20. Interacts with COX16. Requires Cu cation as cofactor.

It is found in the mitochondrion inner membrane. It catalyses the reaction 4 Fe(II)-[cytochrome c] + O2 + 8 H(+)(in) = 4 Fe(III)-[cytochrome c] + 2 H2O + 4 H(+)(out). Component of the cytochrome c oxidase, the last enzyme in the mitochondrial electron transport chain which drives oxidative phosphorylation. The respiratory chain contains 3 multisubunit complexes succinate dehydrogenase (complex II, CII), ubiquinol-cytochrome c oxidoreductase (cytochrome b-c1 complex, complex III, CIII) and cytochrome c oxidase (complex IV, CIV), that cooperate to transfer electrons derived from NADH and succinate to molecular oxygen, creating an electrochemical gradient over the inner membrane that drives transmembrane transport and the ATP synthase. Cytochrome c oxidase is the component of the respiratory chain that catalyzes the reduction of oxygen to water. Electrons originating from reduced cytochrome c in the intermembrane space (IMS) are transferred via the dinuclear copper A center (CU(A)) of subunit 2 and heme A of subunit 1 to the active site in subunit 1, a binuclear center (BNC) formed by heme A3 and copper B (CU(B)). The BNC reduces molecular oxygen to 2 water molecules using 4 electrons from cytochrome c in the IMS and 4 protons from the mitochondrial matrix. This chain is Cytochrome c oxidase subunit 2 (MT-CO2), found in Speothos venaticus (Bush dog).